The following is a 364-amino-acid chain: Aminomethyltransferase (364 aa).

This sequence belongs to the GcvT family. In terms of assembly, the glycine cleavage system is composed of four proteins: P, T, L and H.

It catalyses the reaction N(6)-[(R)-S(8)-aminomethyldihydrolipoyl]-L-lysyl-[protein] + (6S)-5,6,7,8-tetrahydrofolate = N(6)-[(R)-dihydrolipoyl]-L-lysyl-[protein] + (6R)-5,10-methylene-5,6,7,8-tetrahydrofolate + NH4(+). The glycine cleavage system catalyzes the degradation of glycine. This is Aminomethyltransferase from Geobacillus kaustophilus (strain HTA426).